The following is a 206-amino-acid chain: Urease accessory protein UreG (206 aa).

12-19 is a binding site for GTP; sequence GPVGSGKT.

The protein belongs to the SIMIBI class G3E GTPase family. UreG subfamily. Homodimer. UreD, UreF and UreG form a complex that acts as a GTP-hydrolysis-dependent molecular chaperone, activating the urease apoprotein by helping to assemble the nickel containing metallocenter of UreC. The UreE protein probably delivers the nickel.

It is found in the cytoplasm. Facilitates the functional incorporation of the urease nickel metallocenter. This process requires GTP hydrolysis, probably effectuated by UreG. The chain is Urease accessory protein UreG from Synechocystis sp. (strain ATCC 27184 / PCC 6803 / Kazusa).